The following is a 95-amino-acid chain: Pyrimidine/purine nucleoside phosphorylase (95 aa).

The protein belongs to the nucleoside phosphorylase PpnP family.

It carries out the reaction a purine D-ribonucleoside + phosphate = a purine nucleobase + alpha-D-ribose 1-phosphate. The catalysed reaction is adenosine + phosphate = alpha-D-ribose 1-phosphate + adenine. It catalyses the reaction cytidine + phosphate = cytosine + alpha-D-ribose 1-phosphate. The enzyme catalyses guanosine + phosphate = alpha-D-ribose 1-phosphate + guanine. It carries out the reaction inosine + phosphate = alpha-D-ribose 1-phosphate + hypoxanthine. The catalysed reaction is thymidine + phosphate = 2-deoxy-alpha-D-ribose 1-phosphate + thymine. It catalyses the reaction uridine + phosphate = alpha-D-ribose 1-phosphate + uracil. The enzyme catalyses xanthosine + phosphate = alpha-D-ribose 1-phosphate + xanthine. Catalyzes the phosphorolysis of diverse nucleosides, yielding D-ribose 1-phosphate and the respective free bases. Can use uridine, adenosine, guanosine, cytidine, thymidine, inosine and xanthosine as substrates. Also catalyzes the reverse reactions. In Yersinia enterocolitica serotype O:8 / biotype 1B (strain NCTC 13174 / 8081), this protein is Pyrimidine/purine nucleoside phosphorylase.